A 1121-amino-acid polypeptide reads, in one-letter code: Anillin (1121 aa).

Met1 carries the N-acetylmethionine modification. Basic and acidic residues predominate over residues 1–25 (MDPFTEKLLERTRARRENLQRKMAE). A required for ubiquitination region spans residues 1-45 (MDPFTEKLLERTRARRENLQRKMAERPTAVARSAPHAKRGREPLS). Disordered stretches follow at residues 1 to 113 (MDPF…AAIS), 125 to 196 (ADRG…PVGR), and 212 to 402 (DDVS…TKAI). The segment at 1-154 (MDPFTEKLLE…MQRLAEQRRH (154 aa)) is interaction with CD2AP. The interval 1–228 (MDPFTEKLLE…AKQNSVQEQP (228 aa)) is nuclear localization. Phosphoserine is present on residues Ser73 and Ser96. The span at 96 to 109 (SPMPAPRQAKPPAP) shows a compositional bias: pro residues. Over residues 130-143 (NSGSEASATSSVKT) the composition is skewed to polar residues. Basic and acidic residues predominate over residues 147-157 (RLAEQRRHWDS). A Phosphoserine modification is found at Ser180. Thr192 carries the phosphothreonine modification. Residues 216-228 (HSSAKQNSVQEQP) are compositionally biased toward polar residues. Ser223, Ser250, and Ser259 each carry phosphoserine. The tract at residues 229 to 671 (GTACLSKSSS…RDLLYSIDAY (443 aa)) is interaction with F-actin. The segment covering 234–250 (SKSSSASGASASINSSS) has biased composition (low complexity). Residues 282-298 (SASVSSSVKASSPVTAA) are compositionally biased toward low complexity. The segment covering 303 to 314 (ENREAQNPELLH) has biased composition (basic and acidic residues). Thr316 is subject to Phosphothreonine. Phosphoserine is present on residues Ser318 and Ser334. The residue at position 359 (Thr359) is a Phosphothreonine. An N6-acetyllysine modification is found at Lys366. The span at 368 to 384 (FLERFGERCQEHSKESP) shows a compositional bias: basic and acidic residues. A compositionally biased stretch (polar residues) spans 391–401 (KTPNITPNTKA). Residues Thr392 and Thr396 each carry the phosphothreonine modification. Residues Ser414 and Ser444 each carry the phosphoserine modification. Residues 490-511 (NEPAVKLSSTEPAGSTESEMTK) are disordered. A compositionally biased stretch (polar residues) spans 496–511 (LSSTEPAGSTESEMTK). Residues Ser513, Ser548, and Ser556 each carry the phosphoserine modification. Positions 564-599 (FSDVLEEGELDVEKSQEEMDQVGAENSEEQEDALNI) form a coiled coil. Residues 623–635 (SPPSELRDSNLSA) show a composition bias toward polar residues. The tract at residues 623–656 (SPPSELRDSNLSAASPKPGKFQRTRVPRAESADS) is disordered. Phosphoserine is present on residues Ser637, Ser653, Ser656, and Ser659. Tyr666 is subject to Phosphotyrosine. 4 positions are modified to phosphoserine: Ser673, Ser683, Ser787, and Ser924. The localization to the cleavage furrow stretch occupies residues 725-1121 (QQTVIYQASQ…DACYKPVGKP (397 aa)). One can recognise a PH domain in the interval 980 to 1104 (AVEEKGFLTI…WMQKLNQVIV (125 aa)).

In terms of assembly, interacts with F-actin. Interacts with CD2AP. May interact with RHOA. Interacts with FZR1/CDH1 during mitotic exit. Phosphorylated during mitosis. Post-translationally, ubiquitinated, and this requires FZR1/CDH1.

Its subcellular location is the nucleus. The protein localises to the cytoplasm. It localises to the cytoskeleton. It is found in the cell cortex. The protein resides in the cell projection. Its subcellular location is the bleb. In terms of biological role, required for cytokinesis. Essential for the structural integrity of the cleavage furrow and for completion of cleavage furrow ingression. Plays a role in bleb assembly during metaphase and anaphase of mitosis. May play a significant role in podocyte cell migration. The protein is Anillin (Anln) of Mus musculus (Mouse).